The chain runs to 99 residues: Acylphosphatase-2 (99 aa).

Residue S2 is modified to N-acetylserine. The Acylphosphatase-like domain maps to 9–99; sequence SVDYEVFGRV…LEYSNFSIRY (91 aa). Catalysis depends on residues R24 and N42. A Phosphoserine modification is found at S93.

The protein belongs to the acylphosphatase family.

It carries out the reaction an acyl phosphate + H2O = a carboxylate + phosphate + H(+). Its function is as follows. Its physiological role is not yet clear. This chain is Acylphosphatase-2 (ACYP2), found in Homo sapiens (Human).